The following is a 178-amino-acid chain: Signaling threshold-regulating transmembrane adapter 1 (178 aa).

The Extracellular portion of the chain corresponds to 1–23; it reads MSRENNCTTADLAWGIPSITQAW. N6 carries N-linked (GlcNAc...) asparagine glycosylation. Residues 24–44 traverse the membrane as a helical; Signal-anchor for type III membrane protein segment; sequence GLWALFGVVTMLLLISLAALL. Residues 45 to 178 are Cytoplasmic-facing; sequence SQWTRGRRRT…AYANSQPAPS (134 aa). Residues S62 and S65 each carry the phosphoserine modification. At Y72 the chain carries Phosphotyrosine. Residues 72 to 75 form an interaction with GRB2 region; that stretch reads YGNL. The segment at 81 to 102 is disordered; it reads GRLSEESRSEEQDPSSGGLARG. Residues S84, S87, and S89 each carry the phosphoserine modification. Y109 is modified (phosphotyrosine). T126 carries the phosphothreonine modification. The interaction with PTPN11 stretch occupies residues 128 to 133; it reads IKYCEV. Phosphotyrosine is present on residues Y130 and Y151. The segment at 151-154 is interaction with CSK; it reads YASV. S164 carries the post-translational modification Phosphoserine. A Phosphotyrosine modification is found at Y170. The tract at residues 170 to 173 is interaction with GRB2; it reads YANS.

Homodimer; disulfide-linked. When phosphorylated, interacts with PTPN11/SHP2, GRB2 and CSK. In terms of processing, phosphorylated on tyrosines upon TCR activation; which promotes recruitment of PTPN11, GRB2 and CSK. As to expression, lymph node, spleen and thymus.

The protein localises to the cell membrane. Negatively regulates T-cell antigen receptor (TCR)-mediated signaling. Involved in positive selection of T-cells. This is Signaling threshold-regulating transmembrane adapter 1 (Sit1) from Rattus norvegicus (Rat).